Reading from the N-terminus, the 114-residue chain is Somatostatin-1A (114 aa).

Residues 1–24 form the signal peptide; that stretch reads MLSTRIQCALALLSLALAVCSVSA. The propeptide occupies 25–88; sequence APTDAKLRQL…KDEVRLELER (64 aa). A disulfide bridge connects residues Cys-103 and Cys-114.

It belongs to the somatostatin family.

The protein resides in the secreted. Functionally, somatostatin inhibits the release of somatotropin. The chain is Somatostatin-1A (sst1a) from Carassius auratus (Goldfish).